A 131-amino-acid chain; its full sequence is Small ribosomal subunit protein uS11 (131 aa).

The protein belongs to the universal ribosomal protein uS11 family. Part of the 30S ribosomal subunit. Interacts with proteins S7 and S18. Binds to IF-3.

In terms of biological role, located on the platform of the 30S subunit, it bridges several disparate RNA helices of the 16S rRNA. Forms part of the Shine-Dalgarno cleft in the 70S ribosome. The sequence is that of Small ribosomal subunit protein uS11 from Syntrophotalea carbinolica (strain DSM 2380 / NBRC 103641 / GraBd1) (Pelobacter carbinolicus).